The primary structure comprises 415 residues: Multidrug resistance protein MdtA (415 aa).

Residues 1 to 21 (MKGSYKSRWVIVIVVVIAAIA) form the signal peptide. Positions 31–47 (DSQSAAPGATKQAQQSP) are enriched in polar residues. 2 disordered regions span residues 31–60 (DSQS…GPLA) and 392–415 (EAQS…GARS). Residues 399–415 (SEEKATSREYAKKGARS) show a composition bias toward basic and acidic residues.

It belongs to the membrane fusion protein (MFP) (TC 8.A.1) family. Part of a tripartite efflux system composed of MdtA, MdtB and MdtC.

The protein resides in the cell inner membrane. Its function is as follows. The MdtABC tripartite complex confers resistance against novobiocin and deoxycholate. This chain is Multidrug resistance protein MdtA, found in Escherichia coli O139:H28 (strain E24377A / ETEC).